A 178-amino-acid chain; its full sequence is MNPFHELEPGPEVPEVVYALIEIPKGSRNKYELDKKTGLLKLDRVLYSPFFYPVDYGIIPQTWYDDGDPFDIMVIMREPVYPLTIVEARPIGIMKMEDSGDKDWKVLAVPVEDPYFKDWKDIDDVPKAFLDEIAHFFQRYKELQGKTTTVEGWGNAEEAKKEILRAIELYKEKFGKKE.

Residues Lys-30, Arg-44, and Tyr-56 each coordinate substrate. Mg(2+) contacts are provided by Asp-66, Asp-71, and Asp-103. Tyr-140 provides a ligand contact to substrate.

It belongs to the PPase family. In terms of assembly, homohexamer. It depends on Mg(2+) as a cofactor.

Its subcellular location is the cytoplasm. The enzyme catalyses diphosphate + H2O = 2 phosphate + H(+). In terms of biological role, catalyzes the hydrolysis of inorganic pyrophosphate (PPi) forming two phosphate ions. This chain is Inorganic pyrophosphatase, found in Thermococcus kodakarensis (strain ATCC BAA-918 / JCM 12380 / KOD1) (Pyrococcus kodakaraensis (strain KOD1)).